We begin with the raw amino-acid sequence, 98 residues long: NADH-ubiquinone oxidoreductase chain 4L (98 aa).

3 helical membrane-spanning segments follow: residues 1-21 (MTPTHFTISSAFLLGMMGLAF), 26-46 (LLSALLCLEAMMLALFIALSL), and 59-79 (APMLMLAFSACEASAGLALLV).

It belongs to the complex I subunit 4L family.

The protein localises to the mitochondrion membrane. It catalyses the reaction a ubiquinone + NADH + 5 H(+)(in) = a ubiquinol + NAD(+) + 4 H(+)(out). Its function is as follows. Core subunit of the mitochondrial membrane respiratory chain NADH dehydrogenase (Complex I) which catalyzes electron transfer from NADH through the respiratory chain, using ubiquinone as an electron acceptor. Part of the enzyme membrane arm which is embedded in the lipid bilayer and involved in proton translocation. The polypeptide is NADH-ubiquinone oxidoreductase chain 4L (MT-ND4L) (Gadus morhua (Atlantic cod)).